The chain runs to 722 residues: Protein HAPLESS 2-A (722 aa).

A signal peptide spans 1–24 (MPRRRGTPLPTILLLLAFVGGACG). The Extracellular segment spans residues 25 to 552 (TEILSKSRLE…LFDFGCHIQY (528 aa)). Disulfide bonds link C36/C48, C129/C159, C141/C188, C160/C315, C162/C171, C298/C322, and C435/C473. A helical membrane pass occupies residues 553-573 (VCIGWILLLLLIPAAVVFLWL). Topologically, residues 574–722 (LHQEGLFDPL…HRDGHYSPSV (149 aa)) are cytoplasmic. The segment covering 598–641 (RRRHQKGRHHRHHHDHRHRHGHSHGDHHHHYHGGHHQRRRHHHP) has biased composition (basic residues). Disordered stretches follow at residues 598 to 665 (RRRH…RNHH) and 680 to 722 (RLDR…SPSV). Over residues 646-662 (VEGHHHDRQQHSHEAGR) the composition is skewed to basic and acidic residues. Basic residues predominate over residues 701–711 (RRSRHERHGGH). Positions 712–722 (GHRDGHYSPSV) are enriched in basic and acidic residues.

It belongs to the HAP2/GCS1 family.

It is found in the endoplasmic reticulum membrane. It localises to the cell membrane. In terms of biological role, required for male fertility. Plays a role in pollen tube guidance and successful gamete attachment. Essential for the fusion of gametes during double fertilization, where one male gamete fuses with the egg to produce a zygote, and another male gamete fuses with the central cell to produce the endosperm. Mediates the fusion of cell membranes. Not required for pollen tube outgrowth. This Oryza sativa subsp. japonica (Rice) protein is Protein HAPLESS 2-A (HAP2A).